A 534-amino-acid chain; its full sequence is tRNA pseudouridine synthase 1 (534 aa).

The tract at residues 1-32 (MGRGGKRTWYNGDRREAKRNRPNSIYNGEGRP) is disordered. D103 (nucleophile) is an active-site residue. 2 disordered regions span residues 246-271 (LANS…DSDS) and 507-534 (QEVS…DLEG). Residues S518, S519, and S525 each carry the phosphoserine modification.

The protein belongs to the tRNA pseudouridine synthase TruA family. Zn(2+) is required as a cofactor.

It localises to the nucleus. The catalysed reaction is a uridine in tRNA = a pseudouridine in tRNA. It catalyses the reaction uridine in snRNA = pseudouridine in snRNA. It carries out the reaction a uridine in mRNA = a pseudouridine in mRNA. In terms of biological role, formation of pseudouridine at positions 27 and 28 in the anticodon stem and loop of transfer RNAs; at positions 34 and 36 of intron-containing precursor tRNA(Ile) and at position 35 in the intron-containing tRNA(Tyr). Catalyzes pseudouridylation at position 44 in U2 snRNA. Also catalyzes pseudouridylation of mRNAs. The sequence is that of tRNA pseudouridine synthase 1 (pus1) from Schizosaccharomyces pombe (strain 972 / ATCC 24843) (Fission yeast).